The following is a 302-amino-acid chain: Nucleotide-binding protein Strop_3101 (302 aa).

26 to 33 (GVSGGGRS) contributes to the ATP binding site. 77–80 (DVRS) is a GTP binding site.

Belongs to the RapZ-like family.

Displays ATPase and GTPase activities. In Salinispora tropica (strain ATCC BAA-916 / DSM 44818 / JCM 13857 / NBRC 105044 / CNB-440), this protein is Nucleotide-binding protein Strop_3101.